We begin with the raw amino-acid sequence, 604 residues long: Complement factor I (604 aa).

The signal sequence occupies residues 1–18 (MKLALLILLLLNPHLSSS). Cystine bridges form between C36–C260, C46–C57, C51–C62, C64–C96, C70–C89, C78–C109, C144–C186, C157–C219, C191–C201, C234–C252, C246–C261, C264–C276, C271–C289, C283–C298, C349–C474, C387–C403, C395–C465, C488–C552, C516–C531, and C542–C571. N-linked (GlcNAc...) asparagine glycosylation occurs at N40. In terms of domain architecture, Kazal-like spans 58–111 (IEGTCACKLPYQCPKAGTPVCATNGRGYPTYCHLKSFECLHPEIKFSNNGTCTA). N-linked (GlcNAc...) asparagine glycans are attached at residues N106, N116, and N182. The 101-residue stretch at 117–217 (VSLIYGSTDT…SKAPHGLAGV (101 aa)) folds into the SRCR domain. LDL-receptor class A domains follow at residues 218–262 (VCYT…LCCK) and 263–299 (GCRGQAFLCKSGVCIPNQRKCNGEVDCITGEDESGCE). Ca(2+) contacts are provided by K244, D247, V249, D251, D257, and E258. Positions 284, 286, 288, 294, and 295 each coordinate Ca(2+). The Peptidase S1 domain occupies 362–595 (VVGGKPAEMG…YFDWISYYVG (234 aa)). Active-site charge relay system residues include H402 and D450. N-linked (GlcNAc...) asparagine glycosylation is present at N515. The Charge relay system role is filled by S546. N557 carries N-linked (GlcNAc...) asparagine glycosylation.

This sequence belongs to the peptidase S1 family. As to quaternary structure, heterodimer of a light and heavy chains; disulfide-linked. The fully processed and mature protein circulates as a zymogen, and is allosterically activated by substrate-induced remodeling of the active site. Interacts with C3b. Interacts with complement factor H. In terms of tissue distribution, expressed in the liver by hepatocytes. Also present in other cells such as monocytes, fibroblasts or keratinocytes.

The protein localises to the secreted. Its subcellular location is the extracellular space. The enzyme catalyses Inactivates complement subcomponents C3b, iC3b and C4b by proteolytic cleavage.. Its function is as follows. Trypsin-like serine protease that plays an essential role in regulating the immune response by controlling all complement pathways. Inhibits these pathways by cleaving three peptide bonds in the alpha-chain of C3b and two bonds in the alpha-chain of C4b thereby inactivating these proteins. Essential cofactors for these reactions include factor H and C4BP in the fluid phase and membrane cofactor protein/CD46 and CR1 on cell surfaces. The presence of these cofactors on healthy cells allows degradation of deposited C3b by CFI in order to prevent undesired complement activation, while in apoptotic cells or microbes, the absence of such cofactors leads to C3b-mediated complement activation and subsequent opsonization. The polypeptide is Complement factor I (Cfi) (Rattus norvegicus (Rat)).